An 872-amino-acid polypeptide reads, in one-letter code: Protein translocase subunit SecA (872 aa).

ATP-binding positions include Gln-87, 105 to 109 (GEGKT), and Asp-500. 4 residues coordinate Zn(2+): Cys-855, Cys-857, Cys-866, and His-867.

This sequence belongs to the SecA family. Monomer and homodimer. Part of the essential Sec protein translocation apparatus which comprises SecA, SecYEG and auxiliary proteins SecDF-YajC and YidC. Requires Zn(2+) as cofactor.

Its subcellular location is the cell inner membrane. The protein resides in the cytoplasm. The enzyme catalyses ATP + H2O + cellular proteinSide 1 = ADP + phosphate + cellular proteinSide 2.. Its function is as follows. Part of the Sec protein translocase complex. Interacts with the SecYEG preprotein conducting channel. Has a central role in coupling the hydrolysis of ATP to the transfer of proteins into and across the cell membrane, serving both as a receptor for the preprotein-SecB complex and as an ATP-driven molecular motor driving the stepwise translocation of polypeptide chains across the membrane. This Anaplasma marginale (strain St. Maries) protein is Protein translocase subunit SecA.